A 977-amino-acid chain; its full sequence is Receptor-like protein kinase 7 (977 aa).

Positions 1–28 (MAPSLRNFNFFHRFSTFLVFSLFSVVSS) are cleaved as a signal peptide. Topologically, residues 29 to 608 (DDLQVLLKLK…NPSRSHGDTR (580 aa)) are extracellular. LRR repeat units follow at residues 71–95 (RGNV…SVCE), 96–119 (IQSL…DLKN), and 121–145 (TSLK…SLNQ). N-linked (GlcNAc...) asparagine glycosylation is found at Asn73 and Asn119. 2 N-linked (GlcNAc...) asparagine glycosylation sites follow: Asn152 and Asn167. LRR repeat units follow at residues 168 to 194 (ATSL…VVSL), 195 to 218 (KKLS…IGDL), 219 to 242 (TELR…ISKL), 244 to 265 (NLWQ…GFGN), 267 to 289 (KNLT…LRSL), 290 to 312 (TNLV…EFGE), 313 to 337 (FKDL…LGSL), 339 to 361 (DFDF…MCKN), 362 to 385 (GKMK…YANC), 386 to 409 (LTLQ…LWGL), 411 to 433 (KLEI…IKNG), 434 to 457 (KMLG…IGDT), 458 to 481 (ESLT…IGKL), 482 to 505 (KGLS…IGSC), 507 to 529 (MLSD…LGSL), 530 to 553 (PTLN…LSSL), and 555 to 578 (LSLL…SYNG). Residue Asn204 is glycosylated (N-linked (GlcNAc...) asparagine). 2 N-linked (GlcNAc...) asparagine glycosylation sites follow: Asn252 and Asn268. The N-linked (GlcNAc...) asparagine glycan is linked to Asn318. N-linked (GlcNAc...) asparagine glycosylation is found at Asn373 and Asn399. N-linked (GlcNAc...) asparagine glycans are attached at residues Asn536 and Asn577. The helical transmembrane segment at 609–629 (VFVLCIVFGLLILLASLVFFL) threads the bilayer. At 630–977 (YLKKTEKKEG…ESDVKVKEIS (348 aa)) the chain is on the cytoplasmic side. Positions 666 to 959 (IKEENLIGRG…QMIEDAEPCR (294 aa)) constitute a Protein kinase domain. ATP-binding positions include 672-680 (IGRGGCGDV) and Lys694. Asp805 functions as the Proton acceptor in the catalytic mechanism.

This sequence belongs to the protein kinase superfamily. Ser/Thr protein kinase family. As to quaternary structure, interacts with PIP1. As to expression, expressed in roots, stems and dry seeds. Expressed at junctions between organs, such as the insertion zones of stamens, petals and sepals, the transition zones of floral stem and pedicel, pedicel and silique, and floral stem and cauline leaves.

The protein localises to the membrane. It carries out the reaction L-seryl-[protein] + ATP = O-phospho-L-seryl-[protein] + ADP + H(+). The catalysed reaction is L-threonyl-[protein] + ATP = O-phospho-L-threonyl-[protein] + ADP + H(+). Functionally, plays a role in pattern-triggered immunity (PTI) signaling induced by pathogen-associated molecular patterns (PAMPs). Acts as a receptor for PIP1 defense peptide. PIP1 is an endogenous secreted peptide that acts as elicitor of immune response and positive regulator of defense response. Involved in the control of seed germination speed, in tolerance to oxidative stress and in maintaining seed longevity. This is Receptor-like protein kinase 7 from Arabidopsis thaliana (Mouse-ear cress).